Reading from the N-terminus, the 378-residue chain is uncharacterized protein (378 aa).

Residue Cys16 is the For GATase activity of the active site. The 363-residue stretch at 16-378 folds into the Glutamine amidotransferase type-2 domain; sequence CGLFGVIDRS…ELAKQLSEVE (363 aa).

This is an uncharacterized protein from Archaeoglobus fulgidus (strain ATCC 49558 / DSM 4304 / JCM 9628 / NBRC 100126 / VC-16).